Consider the following 583-residue polypeptide: uncharacterized protein (583 aa).

Positions 162–424 (YGIFAAPILD…RGVQQNPFAK (263 aa)) constitute an FAD-binding FR-type domain.

It belongs to the flavoprotein pyridine nucleotide cytochrome reductase family. FAD serves as cofactor.

It localises to the mitochondrion. This is an uncharacterized protein from Schizosaccharomyces pombe (strain 972 / ATCC 24843) (Fission yeast).